A 587-amino-acid polypeptide reads, in one-letter code: Kelch-like protein 3 (587 aa).

Serine 10 bears the Phosphoserine mark. In terms of domain architecture, BTB spans 50–117 (CDVMIVAEDV…VYTAEIEVTE (68 aa)). Residues 152-254 (CLGIRAFADV…PRDYLVQTVE (103 aa)) form the BACK domain. The residue at position 295 (threonine 295) is a Phosphothreonine. Kelch repeat units follow at residues 302-347 (VMIV…FMAG), 348-394 (HVYA…VLND), 396-441 (LYAV…VVEG), 442-490 (KLYA…VLSG), 491-537 (QLYA…AVNG), and 539-585 (LYVV…VIHK). At threonine 375 the chain carries Phosphothreonine. A phosphoserine mark is found at serine 376 and serine 433.

It belongs to the KLHL3 family. Homodimer. Component of the BCR(KLHL3) E3 ubiquitin ligase complex, at least composed of CUL3 and KLHL3 and RBX1. Interacts with CLDN8. In terms of processing, phosphorylation at Ser-433 by PKA or PKC decreases the interaction with WNK1 and WNK4, leading to inhibit their degradation by the BCR(KLHL3) complex. Phosphorylated at Ser-433 by PKC in response to angiotensin II signaling, decreasing ability to promote degradation of WNK1 and WNK4, leading to activation of Na-Cl cotransporter SLC12A3/NCC. Phosphorylation at Ser-433 is increased by insulin. Dephosphorylated at Ser-433 by calcineurin PPP3CA, promoting degradation of WNK1 and WNK4.

The protein resides in the cytoplasm. The protein localises to the cytoskeleton. It is found in the cytosol. Its pathway is protein modification; protein ubiquitination. In terms of biological role, substrate-specific adapter of a BCR (BTB-CUL3-RBX1) E3 ubiquitin ligase complex that acts as a regulator of ion transport in the distal nephron. The BCR(KLHL3) complex acts by mediating ubiquitination and degradation of WNK1 and WNK4, two activators of Na-Cl cotransporter SLC12A3/NCC in distal convoluted tubule cells of kidney, thereby regulating NaCl reabsorption. The BCR(KLHL3) complex also mediates ubiquitination and degradation of WNK3. The BCR(KLHL3) complex also mediates ubiquitination of CLDN8, a tight-junction protein required for paracellular chloride transport in the kidney, leading to its degradation. The protein is Kelch-like protein 3 (KLHL3) of Pongo abelii (Sumatran orangutan).